The primary structure comprises 567 residues: MASSSSSRLLFLLSCSVLALLAGAEVHHHEFIVQETPVKRLCKTHNVITVNGQLPGPTLEVREGDTVVINVVNHAQYNVTIHWHGIRQFRTGWADGPEFVTQCPIKPGGSYKYRFTIEGQEGTLWWHAHSSWLRATVYGALIIRPRENKTYPFEKPAREVPLILGEWWDADPIQVIREAQRTGAAPNISDAYTINGQPGDLYNCSKEETTAVPVKPGETALLRFINAALNQELFVSIAQHKMTVVGVDASYTKPFTTSVLMIAPGQTTDVLVTMDQAPTRYYLAARAYDSAQGVAFDNTTTTAVIEYDCGCATDFGPSIPPAFPVLPAFNDTNTATAFAAGIRSPHEVKIPGPVDENLFFTVGVGLFNCEPGQQCGGPNNTRFTASMNNISFVFPQTTSLLHAHYYGIPGVFTTDFPAYPPVQFDYTAQNVPRYLWQPVPATKLYKLKFGSVVQIVLQDTSIVSPENHPIHIHGYDFYILAEGFGNFDPKKDAKKFNYVDPPQRNTVAVPTNGWAVIRFVADNPGVWLMHCHLDVHITWGLAMAFLVEDGYGKLETLEAPPVDLPMC.

The N-terminal stretch at 1–24 (MASSSSSRLLFLLSCSVLALLAGA) is a signal peptide. Plastocyanin-like domains follow at residues 32–148 (IVQE…PREN) and 158–310 (REVP…YDCG). Residue N78 is glycosylated (N-linked (GlcNAc...) asparagine). H82, H84, H127, and H129 together coordinate Cu cation. N-linked (GlcNAc...) asparagine glycans are attached at residues N148, N187, N203, N298, N330, N379, and N389. The Plastocyanin-like 3 domain maps to 415 to 551 (DFPAYPPVQF…AMAFLVEDGY (137 aa)). Residues H468, H471, H473, H530, C531, H532, and H536 each contribute to the Cu cation site.

This sequence belongs to the multicopper oxidase family. The cofactor is Cu cation.

It localises to the secreted. It is found in the extracellular space. The protein localises to the apoplast. It carries out the reaction 4 hydroquinone + O2 = 4 benzosemiquinone + 2 H2O. Functionally, lignin degradation and detoxification of lignin-derived products. The polypeptide is Laccase-3 (LAC3) (Oryza sativa subsp. japonica (Rice)).